The chain runs to 836 residues: MGYTIKQKIGICLKAEANPEMTQSDLALWAMKEYNSERPPSQTTISRILNSKNDIISRKESEFELIRRRKRANPLLRRILTEWITQANWEGIPITTPIIQSTANAIWTRLPKEGQEGNGIFNQKWCSHFVKKLNINITGSPRDVLDNRGYNLNKVWKLDEILELKRYLRDIIDQEDYAPQDVFVIDDFQLFYSLPLDQIFDVSSIDKGIKQSNSSAEHSLTIMLGCNIDGSEKLTPIIVGKYDKFDVSKSTHVSLNSMQFDSVSYQTLMNKLTEVYNIFYKSNTNKWITSSMFQNYLTRLDHKLSNSRPNGRKILIILDDCSSHRIINLKFNNIRLCYLKNEANHKNPYNTTYSGIKFDYLPMNFGIVEEFKILYRLQQYLEMINLQRSKSQIDSDPMIEENLTSTSVATTATALEVLSESDYHISLIRAIEWITRSWHSVSSERIFSSWKKTHLFNLLDWPSGNSGQLVYLNQKLNTFDENKSLKKLKEVMSYLNVVIPWEIDELVGLVNERGKVTLSYASIEEIIDSCLSEPVDDYDEMGDDDGRFDNRKNELGDVSSVPVDNSNDPWFTVSEINEFHNDPFYNNDKSIDAAAEPLESISPDNDSSAIPGLETKALSAISGLGTTSTSVVSDSPSGTTQKYNNISTYPNGSLKHKLGVLENWNRKRGPGQGQGQGQELQNPQGQQQQEQQQQQQHQMSGYNFSPISNIESPIASGGLTNPNVQFGNGAGSFDNQTPLFMNSLTSPPPPPPVPVPVPVPVPSVPSQVPATSFPQDVSSSRAVRAPMSTAAVDVDMATAITKLLEYSASNTLKLSQSTIDDLDYNLRVIRARLNQR.

The 76-residue stretch at 64 to 139 folds into the HTH CENPB-type domain; sequence ELIRRRKRAN…VKKLNINITG (76 aa). The segment covering 626-640 has biased composition (low complexity); that stretch reads TTSTSVVSDSPSGTT. The interval 626–732 is disordered; sequence TTSTSVVSDS…NVQFGNGAGS (107 aa). Polar residues predominate over residues 641 to 651; that stretch reads QKYNNISTYPN. Over residues 677-698 the composition is skewed to low complexity; sequence GQELQNPQGQQQQEQQQQQQHQ. The span at 699–711 shows a compositional bias: polar residues; it reads MSGYNFSPISNIE.

Functionally, essential for the synthesis of pyruvate decarboxylase. The protein is Protein PDC2 (PDC2) of Candida albicans (Yeast).